A 379-amino-acid chain; its full sequence is Mannitol-1-phosphate 5-dehydrogenase (379 aa).

Residue 3-14 (AVHFGAGNIGRG) coordinates NAD(+).

It belongs to the mannitol dehydrogenase family.

The catalysed reaction is D-mannitol 1-phosphate + NAD(+) = beta-D-fructose 6-phosphate + NADH + H(+). The polypeptide is Mannitol-1-phosphate 5-dehydrogenase (Anoxybacillus flavithermus (strain DSM 21510 / WK1)).